The following is a 426-amino-acid chain: Trophoblast glycoprotein (426 aa).

The signal sequence occupies residues Met1 to Ala31. Over Ser32–Ser361 the chain is Extracellular. Residues Ala33–Ala47 are compositionally biased toward low complexity. The segment at Ala33–Ser53 is disordered. Residues Ser53 to Pro91 enclose the LRRNT domain. 2 disulfide bridges follow: Cys62-Cys68 and Cys66-Cys77. 7 LRR repeats span residues Tyr92–Arg113, Pro116–Glu139, Leu141–Ala163, Pro172–Arg210, Leu215–Gln238, Leu239–Arg261, and Asn262–Asn281. N-linked (GlcNAc...) asparagine glycosylation occurs at Asn124. An N-linked (GlcNAc...) asparagine glycan is attached at Asn281. The region spanning Gly289–Ala352 is the LRRCT domain. 2 cysteine pairs are disulfide-bonded: Cys304/Cys329 and Cys306/Cys350. A helical membrane pass occupies residues Tyr362 to Leu382. The Cytoplasmic segment spans residues Asn383 to Val426. A Phosphoserine modification is found at Ser424.

In terms of processing, highly glycosylated. As to expression, highly expressed in embryo and placenta. In adult, expressed only in brain and ovary. Not detected in kidney small intestine, heart, spleen, testis, liver, lung, thymus and stomach.

The protein resides in the cell membrane. Its function is as follows. May function as an inhibitor of Wnt/beta-catenin signaling by indirectly interacting with LRP6 and blocking Wnt3a-dependent LRP6 internalization. This Mus musculus (Mouse) protein is Trophoblast glycoprotein (Tpbg).